A 127-amino-acid polypeptide reads, in one-letter code: Glycine cleavage system H protein (127 aa).

The region spanning 22-104 is the Lipoyl-binding domain; it reads EVVIGITHFA…YEGAWMVKVE (83 aa). Position 63 is an N6-lipoyllysine (Lys63).

The protein belongs to the GcvH family. As to quaternary structure, the glycine cleavage system is composed of four proteins: P, T, L and H. The cofactor is (R)-lipoate.

Its function is as follows. The glycine cleavage system catalyzes the degradation of glycine. The H protein shuttles the methylamine group of glycine from the P protein to the T protein. In terms of biological role, is also involved in protein lipoylation via its role as an octanoyl/lipoyl carrier protein intermediate. The polypeptide is Glycine cleavage system H protein (Bacillus cereus (strain ATCC 10987 / NRS 248)).